The chain runs to 1303 residues: Protein STU1 (1303 aa).

Disordered stretches follow at residues 239–259 (RGSDPEPHVQRANTPRSNTPV), 531–664 (SQRE…GAVS), and 953–977 (EASDSSPQKQSQMDQISSKRSNSEH). Positions 249–259 (RANTPRSNTPV) are enriched in polar residues. The segment covering 554-568 (SLKEAILEKNKELRQ) has biased composition (basic and acidic residues). Over residues 573 to 583 (SRNSGEQSTKI) the composition is skewed to polar residues. Residues 596 to 609 (SRLEKSLLRPDVGH) are compositionally biased toward basic and acidic residues. Polar residues predominate over residues 618-629 (SSWTYPSTQSGP). Residues 634–648 (KQRERSKTEVHKKSP) show a composition bias toward basic and acidic residues. Composition is skewed to polar residues over residues 653-664 (RPSSRLDTGAVS) and 955-972 (SDSSPQKQSQMDQISSKR).

This sequence belongs to the CLASP family. As to quaternary structure, interacts with microtubules.

It localises to the cytoplasm. Its subcellular location is the cytoskeleton. The protein resides in the nucleus. The protein localises to the spindle. Functionally, microtubule binding protein that promotes the stabilization of dynamic microtubules. Required for mitotic spindle formation. The polypeptide is Protein STU1 (STU1) (Candida albicans (strain SC5314 / ATCC MYA-2876) (Yeast)).